The sequence spans 300 residues: (R)-3-hydroxydecanoyl-ACP:CoA transacylase (300 aa).

One can recognise an AB hydrolase-1 domain in the interval 29–253; it reads TIILVNGSLS…HTIRNAGHFI (225 aa).

The protein operates within polyester biosynthesis; polyhydroxyalkanoate biosynthesis. Catalyzes the transfer of the acyl moiety from in vitro synthesized 3-hydroxydecanoyl-CoA to acyl carrier protein. In Pseudomonas aeruginosa (strain ATCC 15692 / DSM 22644 / CIP 104116 / JCM 14847 / LMG 12228 / 1C / PRS 101 / PAO1), this protein is (R)-3-hydroxydecanoyl-ACP:CoA transacylase (phaG).